We begin with the raw amino-acid sequence, 402 residues long: Oxysterol-binding protein 12 (402 aa).

Positions 333 to 366 (NNNNDKETAEEKAKIEEKQRKEESERREKGILWE) are disordered. The span at 336–366 (NDKETAEEKAKIEEKQRKEESERREKGILWE) shows a compositional bias: basic and acidic residues.

Belongs to the OSBP family.

This Dictyostelium discoideum (Social amoeba) protein is Oxysterol-binding protein 12 (osbL).